We begin with the raw amino-acid sequence, 499 residues long: MAQFAFESDLHSLLQLDAPIPNAPPARWQRKAKEAAGPAPSPMRAANRSHSAGRTPGRTPGKSSSKVQTTPSKPGGDRYIPHRSAAQMEVASFLLSKENQPENSQTPTKKEHQKAWALNLNGFDVEEAKILRLSGKPQNAPEGYQNRLKVLYSQKATPGSSRKTCRYIPSLPDRILDAPEIRNDYYLNLVDWSSGNVLAVALDNSVYLWSASSGDILQLLQMEQPGEYISSVAWIKEGNYLAVGTSSAEVQLWDVQQQKRLRNMTSHSARVGSLSWNSYILSSGSRSGHIHHHDVRVAEHHVATLSGHSQEVCGLRWAPDGRHLASGGNDNLVNVWPSAPGEGGWVPLQTFTQHQGAVKAVAWCPWQSNVLATGGGTSDRHIRIWNVCSGACLSAVDAHSQVCSILWSPHYKELISGHGFAQNQLVIWKYPTMAKVAELKGHTSRVLSLTMSPDGATVASAAADETLRLWRCFELDPARRREREKASAAKSSLIHQGIR.

Positions 17–80 are disordered; that stretch reads DAPIPNAPPA…PSKPGGDRYI (64 aa). Serine 41 is subject to Phosphoserine. Polar residues predominate over residues 61-72; that stretch reads GKSSSKVQTTPS. Lysine 66 carries the post-translational modification N6-acetyllysine. Threonine 70 is modified (phosphothreonine). A phosphoserine mark is found at serine 72 and serine 92. Phosphothreonine is present on threonine 106. The residue at position 153 (serine 153) is a Phosphoserine. The residue at position 157 (threonine 157) is a Phosphothreonine. Serine 161 carries the post-translational modification Phosphoserine. WD repeat units follow at residues 182 to 221, 224 to 263, 266 to 303, 307 to 346, 353 to 395, 397 to 438, and 441 to 480; these read RNDY…QLLQ, QPGE…RLRN, SHSA…HHVA, GHSQ…GGWV, QHQG…CLSA, DAHS…KVAE, and GHTS…PARR. Glycyl lysine isopeptide (Lys-Gly) (interchain with G-Cter in ubiquitin) cross-links involve residues lysine 485 and lysine 490.

This sequence belongs to the WD repeat CDC20/Fizzy family. Component of a complex with CDC20, CDC27, SPATC1 and TUBG1. Interacts with NEUROD2. Interacts with dimeric MAD2L1 in its closed conformation form. Interacts with BUB1B. The phosphorylated form interacts with APC/C. Interacts with NINL. May interact with MAD2L2. Interacts with CDK5RAP2. Interacts with SIRT2. Interacts with isoform 1 of NEK2. Interacts with HSF1 (via phosphorylated form); this interaction occurs in mitosis in a MAD2L1-dependent manner and prevents PLK1-stimulated degradation of HSF1 by blocking the recruitment of the SCF(BTRC) ubiquitin ligase complex. Interacts (via the N-terminal substrate-binding domain) with FBXO5. Interacts with CCNF. Interacts with USP22. Acetylated. Deacetylated at Lys-66 by SIRT2; deacetylation enhances the interaction of CDC20 with CDC27, leading to activation of anaphase promoting complex/cyclosome (APC/C). In terms of processing, phosphorylated during mitosis. Phosphorylated by BUB1 at Ser-41; Ser-72; Ser-92; Ser-153; Thr-157 and Ser-161. Phosphorylated by NEK2. Post-translationally, dephosphorylated by CTDP1. Ubiquitinated and degraded by the proteasome during spindle assembly checkpoint. Deubiquitinated by USP44, leading to stabilize the MAD2L1-CDC20-APC/C ternary complex, thereby preventing premature activation of the APC/C. Ubiquitinated at Lys-490 during prometaphase. Ubiquitination at Lys-485 and Lys-490 has no effect on its ability to bind the APC/C complex. Ubiquitinated by UBR5 when not assembled in a multiprotein complex, leading to its degradation: UBR5 recognizes and binds a degron that is not accessible when CDC20 is part of a complex.

The protein localises to the cytoplasm. It localises to the cytoskeleton. Its subcellular location is the microtubule organizing center. It is found in the centrosome. The protein resides in the chromosome. The protein localises to the centromere. It localises to the kinetochore. Its subcellular location is the spindle pole. It participates in protein modification; protein ubiquitination. Its function is as follows. Substrate-specific adapter of the anaphase promoting complex/cyclosome (APC/C) complex that confers substrate specificity by binding to substrates and targeting them to the APC/C complex for ubiquitination and degradation. Recognizes and binds the destruction box (D box) on protein substrates. Involved in the metaphase/anaphase transition of cell cycle. Is regulated by MAD2L1: in metaphase the MAD2L1-CDC20-APC/C ternary complex is inactive and in anaphase the CDC20-APC/C binary complex is active in degrading substrates. The CDC20-APC/C complex positively regulates the formation of synaptic vesicle clustering at active zone to the presynaptic membrane in postmitotic neurons. CDC20-APC/C-induced degradation of NEUROD2 induces presynaptic differentiation. The CDC20-APC/C complex promotes proper dilation formation and radial migration by degrading CCDC41. This is Cell division cycle protein 20 homolog (CDC20) from Homo sapiens (Human).